We begin with the raw amino-acid sequence, 619 residues long: MAREHAIGEATGKRKKRGRVEEAEEYCNDGIEEQVEDEKLPLEVGMFYYPMTPPSFIVSDALEPDFPLIYVNRVFEVFTGYRADEVLGRNCRFLQYRDPRAQRRHPLVDPVVVSEIRRCLEEGIEFQGELLNFRKDGTPLVNRLRLAPIRDDDGTITHVIGIQVFSETTIDLDRVSYPVFKHKQQLDQTSECLFPSGSPRFKEHHEDFCGILQLSDEVLAHNILSRLTPRDVASIGSACRRLRQLTKNESVRKMVCQNAWGKEITGTLEIMTKKLRWGRLARELTTLEAVCWRKFTVGGIVQPSRCNFSACAVGNRLVLFGGEGVNMQPLDDTFVLNLDAECPEWQRVRVTSSPPGRWGHTLSCLNGSWLVVFGGCGRQGLLNDVFVLDLDAKHPTWKEVAGGTPPLPRSWHSSCTIEGSKLVVSGGCTDAGVLLSDTFLLDLTTDKPTWKEIPTSWAPPSRLGHSLSVFGRTKILMFGGLANSGHLKLRSGEAYTIDLEDEEPRWRELECSAFPGVVVPPPRLDHVAVSMPCGRVIIFGGSIAGLHSPSQLFLIDPAEEKPSWRILNVPGKPPKLAWGHSTCVVGGTRVLVLGGHTGEEWILNELHELCLASRQDSDL.

In terms of domain architecture, PAS spans Val44–Gly123. Residue Cys91 is modified to S-4a-FMN cysteine. One can recognise a PAC domain in the interval Gln127–Thr168. Residues Ile211–Gln257 enclose the F-box domain. Kelch repeat units lie at residues Ser304–Pro354, Arg357–Thr404, Arg409–Trp457, Arg462–Ala513, and Arg523–Gly571.

Belongs to the ADAGIO family. As to quaternary structure, interacts with ADO1 (via Kelch repeats), ADO2 (via Kelch repeats), SKP1A/ASK1, SKP1B/ASK2, ASK3, SKP1K/ASK11, ASK12, ASK13 and SKP1N/ASK14. Interacts (via Kelch repeats) with CDF1, CDF2 and CDF3. Interacts (via N-terminus) with CO and GI (via N-terminus) in a blue-light-dependent manner. Post-translationally, FMN binds covalently to cysteine after exposure to blue light and is reversed in the dark. In terms of tissue distribution, highly expressed in stomata and leaves and to a lower extent in seeds, roots, rosettes, stems and siliques. Also present in sepals and anther filaments.

It localises to the nucleus. The protein localises to the cytoplasm. It functions in the pathway protein modification; protein ubiquitination. Its function is as follows. Component of an E3 ubiquitin ligase complex that plays a central role in blue light-dependent circadian cycles. Acts as a blue light photoreceptor, due to the presence of FMN, that mediates light-regulated protein degradation of critical clock components by targeting them to the proteasome complex. The SCF(ADO3) E3 ubiquitin ligase complex is involved in the regulation of circadian clock-dependent processes including transition to flowering time, hypocotyl elongation, cotyledons and leaf movement rhythms. Forms a complex with 'GIGANTEA' (GI) to regulate 'CONSTANS' (CO) expression. Promotes CO expression during the light period of long days by decreasing the stability of CDF1 and CDF2 and by interacting directly with the CO protein and stabilizing it. ADO3 function is mainly GI dependent. Does not act as a regulator of CDF1 transcription. The interactions of ADO1/ZTL and ADO2 with ADO3 prevent its interaction with CDF1. The polypeptide is Adagio protein 3 (ADO3) (Arabidopsis thaliana (Mouse-ear cress)).